We begin with the raw amino-acid sequence, 71 residues long: UPF0346 protein Sez_1447 (71 aa).

This sequence belongs to the UPF0346 family.

The protein is UPF0346 protein Sez_1447 of Streptococcus equi subsp. zooepidemicus (strain MGCS10565).